Consider the following 478-residue polypeptide: Sphingomyelin synthase-related protein 1 (478 aa).

Over residues 1 to 22 the composition is skewed to low complexity; sequence MPAGSRAGSRLRSGSLPRPSRL. The segment at 1 to 65 is disordered; the sequence is MPAGSRAGSR…TAEEVEKEMA (65 aa). The SAM domain maps to 75–141; the sequence is WTTKHVAVWL…MLSVRKLQKI (67 aa). The next 6 membrane-spanning stretches (helical) occupy residues 216-236, 264-284, 295-315, 341-361, 385-405, and 410-430; these read ILSC…MVIV, FSMT…VLLL, LCSL…VTSL, AIWS…DYMF, FLHT…LAAH, and IDVF…HTLA. At 431–478 the chain is on the cytoplasmic side; the sequence is NTRAYHQSRRARIWFPMFSFFECNVNGTVPNEYCWPFSKPAIMKRLIG.

It belongs to the sphingomyelin synthase family. Expressed ubiquitously with highest levels in macrophages and testis.

It localises to the endoplasmic reticulum membrane. It catalyses the reaction an N-acylsphing-4-enine + a 1,2-diacyl-sn-glycero-3-phosphoethanolamine = an N-acylsphing-4-enine 1-phosphoethanolamine + a 1,2-diacyl-sn-glycerol. The enzyme catalyses an N-acylsphinganine + a 1,2-diacyl-sn-glycero-3-phosphoethanolamine = an N-acylsphinganine-1-phosphoethanolamine + a 1,2-diacyl-sn-glycerol. It carries out the reaction an N-acyl-(4R)-4-hydroxysphinganine + a 1,2-diacyl-sn-glycero-3-phosphoethanolamine = an N-acyl-(4R)-4-hydroxysphinganine-1-phosphoethanolamine + a 1,2-diacyl-sn-glycerol. The catalysed reaction is N-hexadecanoylsphinganine + a 1,2-diacyl-sn-glycero-3-phosphoethanolamine = N-hexadecanoyl-sphinganine-1-phosphoethanolamine + a 1,2-diacyl-sn-glycerol. It catalyses the reaction N-hexadecanoyl-(4R)-hydroxysphinganine + a 1,2-diacyl-sn-glycero-3-phosphoethanolamine = N-hexadecanoyl-(4R)-hydroxysphinganine-1-phosphoethanolamine + a 1,2-diacyl-sn-glycerol. It functions in the pathway sphingolipid metabolism. Functionally, synthesizes sphingolipids through transfer of a phosphatidyl head group from a glycerophospholipid on to the primary hydroxyl of a ceramide in the lumen of the endoplasmic reticulum. Catalyzes the synthesis of ceramide phosphoethanolamines (CPEs) (such as N-acylsphing-4-enine 1-phosphoethanolamine) by transferring phosphoethanolamine head group, which is smaller and more hydrophilic than the phosphocholine (PC) headgroup transferred in the canonical sphingomyelin synthesis (SMS) reaction by SMS1 or SMS2, from a phosphatidylethanolamine (1,2-diacyl-sn-glycero-3-phosphoethanolamine, PE) to a ceramide (such as N-acylsphing-4-enine). The larger PC prevents an efficient fit in the enzyme's catalytic pocket, leading to little or no SMS activity. In vitro, in the absence of ceramide, it has PLC activity with preference for phosphatidylinositol and phosphatidic acid, but also hydrolyzes phosphatidylethanolamine. The sequence is that of Sphingomyelin synthase-related protein 1 from Mus musculus (Mouse).